The chain runs to 224 residues: Cytochrome c biogenesis ATP-binding export protein CcmA (224 aa).

One can recognise an ABC transporter domain in the interval 1 to 220 (MQNAEAAPAL…EYAHAEVVGA (220 aa)). 40 to 47 (GANGSGKT) contributes to the ATP binding site.

It belongs to the ABC transporter superfamily. CcmA exporter (TC 3.A.1.107) family. In terms of assembly, the complex is composed of two ATP-binding proteins (CcmA) and two transmembrane proteins (CcmB).

The protein resides in the cell inner membrane. It catalyses the reaction heme b(in) + ATP + H2O = heme b(out) + ADP + phosphate + H(+). Its function is as follows. Part of the ABC transporter complex CcmAB involved in the biogenesis of c-type cytochromes; once thought to export heme, this seems not to be the case, but its exact role is uncertain. Responsible for energy coupling to the transport system. The sequence is that of Cytochrome c biogenesis ATP-binding export protein CcmA from Bordetella parapertussis (strain 12822 / ATCC BAA-587 / NCTC 13253).